A 133-amino-acid chain; its full sequence is Ribosome-binding factor A (133 aa).

This sequence belongs to the RbfA family. As to quaternary structure, monomer. Binds 30S ribosomal subunits, but not 50S ribosomal subunits or 70S ribosomes.

The protein resides in the cytoplasm. Functionally, one of several proteins that assist in the late maturation steps of the functional core of the 30S ribosomal subunit. Associates with free 30S ribosomal subunits (but not with 30S subunits that are part of 70S ribosomes or polysomes). Required for efficient processing of 16S rRNA. May interact with the 5'-terminal helix region of 16S rRNA. This Cronobacter sakazakii (strain ATCC BAA-894) (Enterobacter sakazakii) protein is Ribosome-binding factor A.